A 214-amino-acid polypeptide reads, in one-letter code: MGRRPARCYRYCKNKPYPKSRFCRGVPDAKIRIFDLGRKKAKVDEFPLCGHMVSDEYEQLSSEALEAARICANKYMVKSCGKDGFHIRVRLHPFHVIRINKMLSCAGADRLQTGMRGAFGKPQGTVARVHIGQVIMSIRTKLQNKEHVIEALRRAKFKFPGRQKIHISKKWGFTKFNADEFEDMVAEKRLIPDGCGVKYIPNRGPLDKWRALHS.

Position 32 is a citrulline (arginine 32). A Glycyl lysine isopeptide (Lys-Gly) (interchain with G-Cter in SUMO2) cross-link involves residue lysine 175. Residue lysine 188 forms a Glycyl lysine isopeptide (Lys-Gly) (interchain with G-Cter in ubiquitin) linkage.

The protein belongs to the universal ribosomal protein uL16 family. In terms of assembly, component of the large ribosomal subunit. Mature ribosomes consist of a small (40S) and a large (60S) subunit. The 40S subunit contains about 33 different proteins and 1 molecule of RNA (18S). The 60S subunit contains about 49 different proteins and 3 molecules of RNA (28S, 5.8S and 5S). In terms of processing, citrullinated by PADI4. Ufmylated by UFL1.

The protein localises to the cytoplasm. Component of the large ribosomal subunit. Plays a role in the formation of actively translating ribosomes. May play a role in the embryonic brain development. The chain is Large ribosomal subunit protein uL16 from Rattus norvegicus (Rat).